The sequence spans 935 residues: Formin-I (935 aa).

Positions 35-76 (QQQQQQQQQQINNENENSINNQENKENNNKDNNNNNNKEIKQ) form a coiled coil. 3 disordered regions span residues 52-78 (SINNQENKENNNKDNNNNNNKEIKQSS), 380-511 (LSSA…QLTP), and 561-590 (KEKMSKENLNNSNNNNNNNSNNNGEEQSLS). Positions 384-407 (KKQPQQQPQKDVTSSSSSSSNSSS) are enriched in low complexity. Residues 418–428 (ITTNDSSSSNP) are compositionally biased toward polar residues. Over residues 431 to 443 (DFDKLSLSSDDKV) the composition is skewed to basic and acidic residues. Residues 444–454 (NNNNVQIENTT) show a composition bias toward polar residues. One can recognise an FH1 domain in the interval 444–505 (NNNNVQIENT…KPNNSGGGGG (62 aa)). Residues 456 to 482 (SVPPPPPVGAPPPPPPPPPPPPPPPPS) show a composition bias toward pro residues. The span at 484–499 (LKLNRNRISTPKKPNN) shows a compositional bias: polar residues. The FH2 domain maps to 506 to 935 (GGQLTPLQKK…SLNLSTLNSK (430 aa)). Residues 568–583 (NLNNSNNNNNNNSNNN) are compositionally biased toward low complexity. Coiled-coil stretches lie at residues 702 to 730 (SLLDSIEINNNQLSKAIEQLRNSRKFIKV) and 803 to 834 (QSSLENILEESNEIENKFKQVDQEIQYHQQLL).

The protein belongs to the formin homology family. Diaphanous subfamily.

Formins play an important role in the nucleation of actin and the formation of linear actin filaments. This Dictyostelium discoideum (Social amoeba) protein is Formin-I (forI).